We begin with the raw amino-acid sequence, 338 residues long: Trace amine-associated receptor 9 (338 aa).

Over 1-23 (MELCYENVNGSCIKSSYSPWPRA) the chain is Extracellular. An N-linked (GlcNAc...) asparagine glycan is attached at Asn-9. 2 cysteine pairs are disulfide-bonded: Cys-12/Cys-176 and Cys-95/Cys-180. Residues 24-48 (ILYAVLGLGALLAVFGNLLVITAIL) form a helical membrane-spanning segment. The Cytoplasmic portion of the chain corresponds to 49 to 58 (HFKQLHTPTN). Residues 59-80 (FLVASLACADFLVGVTVMPFST) traverse the membrane as a helical segment. Residues 81–95 (VRSVEGCWYFGDTYC) are Extracellular-facing. The helical transmembrane segment at 96–118 (KFHTCFDTSFCFASLFHLCCISI) threads the bilayer. 2 residues coordinate spermidine: Asp-102 and Thr-103. Residues 119-138 (DRYVAVTDPLTYPTKFTISV) are Cytoplasmic-facing. A helical transmembrane segment spans residues 139–160 (SGVCIALSWFFSVTYSFSIFYT). Over 161-186 (GANEEGIEELVVALTCVGGCQAPLNQ) the chain is Extracellular. Residues 164-177 (EEGIEELVVALTCV) are extracellular Loop 2 (ECL2). Residues 187-208 (NWVLLCFLLFFLPTVVMVFLYG) traverse the membrane as a helical segment. At 209-246 (RIFLVAKQQARKIEGSANQPQASSESYKERVARRERKA) the chain is on the cytoplasmic side. The helical transmembrane segment at 247-270 (AKTLGIAMAAFLVSWLPYIIDAVI) threads the bilayer. The Extracellular portion of the chain corresponds to 271 to 283 (DAYMNFITPAYVY). A helical membrane pass occupies residues 284 to 304 (EILVWCVYYNSAMNPLIYAFF). At 305–338 (YPWFRKAIKLIVSGKVFRADSSRTNLFSEEAGAG) the chain is on the cytoplasmic side.

This sequence belongs to the G-protein coupled receptor 1 family. Mainly expressed in neurons of the olfactory epithelium. Also expressed in the intestine.

The protein resides in the cell membrane. Functionally, olfactory receptor specific for trace amines, such as triethylamine, N-methylpiperidine, N,N-dimethylcyclohexylamine (DMCHA), beta-phenylethylamine (beta-PEA), cadaverine (CAD) and polyamines such as spermidine. Trace amine compounds are enriched in animal body fluids and act on trace amine-associated receptors (TAARs) to elicit both intraspecific and interspecific innate behaviors. Trace amine-binding causes a conformation change that triggers signaling via G(s)-class of G alpha proteins (GNAL or GNAS). In mature olfactory sensory neurons, Taar9 is coupled with GNAL/G(olf)G alpha protein and mediates activation of adenylate cyclase activity to activate cAMP signaling and eventually transmit odorant signals to achieve membrane depolarization. In immature olfactory sensory neurons, Taar9 is coupled with GNAS/G(s) G alpha proteins. The chain is Trace amine-associated receptor 9 from Rattus norvegicus (Rat).